Consider the following 820-residue polypeptide: MDGEGFGELLQQAEQLAAETEGVTELPHVERNLQEIQQAGERLRSKTMTRTSQESANVKASVLLGSRGLDISHISQRLESLSAATTFEPLEPVKDTDIQGFLKNEKDNALLSAIEESRKRTFVMAEEYHRESMLVEWEQVKQRVLHTLLASGEDALDFTQESETSYISESGAPGRSSLDNVEMAYARQMYMYNEKVVSGHLQPSLVDLCTEAAERLDDKNVSDLWVMVKQMTDVPLIPASDTLKSRCSGQMQMAFVRQALNYLEQSYKNYTLISVFANLQQAQLGGVPGTYNLVRSFLNIRLPTPIPGLQDGEIEGYPVWALIYYCMRCGDLMAAQQVVNRAQHQLGDFKNCFQEYIHNKDRRLSPTTENKLRLHYRRAVRASTDPYKRAVYCIIGRCDVSDNHSEVADKTEDYLWLKLSQVCFEDEANSSPQDRLTLPQFQKQLFEDYGESHFAVNQQPYLYFQVLFLTAQFEAAIAFLFRLERTRCHAVHVALALFELKLLLKSTGQSAQLLSQEPGEPQGVRRLNFIRLLMLYTRKFEPTDPREALQYFYFLRNEKDNQGESMFLRCVSELVIESREFDMLLGKLEKDGSRKPGAIDKFTRDTKTIINKVASVAENKGLFEEAAKLYDLAKNPDKVLELTNKLLSPVVSQISAPQSNRERLKNMALAIAERYKSQGVSAEKSINSTFYLLLDLITFFDEYHAGHIDLSFDVIERLKLVPLSQDSVEERVAAFRNFSDEIRHNLSEILLATMNILFTQYKRLKGSGPTTLGRPQRVQEDKDSVLRSQARALITFAGMIPYRMSGDTNARLVQMEVLMN.

Belongs to the nucleoporin interacting component (NIC) family.

It is found in the nucleus membrane. It localises to the nucleus. The protein localises to the nuclear pore complex. Its function is as follows. Plays a role in the nuclear pore complex (NPC) assembly and/or maintenance. This Xenopus laevis (African clawed frog) protein is Nuclear pore complex protein Nup93 (nup93).